The following is a 216-amino-acid chain: MLHGIGMTSQRTRARMIERLREKGIRNEAVLKAMAAVPRHVFVEEALASRAYEDTALPLGMGQTISQPFVVARMIELLLNGRSSLGKTLEVGAGCGYQAAVLAQLTKDVYAVERLGPLLEKAKANMRILQQFNVRLKHADGQLGLPEAGPFDSIIVAAAGSHVPPALLEQLAPGGRLVLPVGAGEQYLSFIEHTPQGYVETRLDAVRFVPLLSGTQ.

Ser66 is an active-site residue.

It belongs to the methyltransferase superfamily. L-isoaspartyl/D-aspartyl protein methyltransferase family.

The protein localises to the cytoplasm. The enzyme catalyses [protein]-L-isoaspartate + S-adenosyl-L-methionine = [protein]-L-isoaspartate alpha-methyl ester + S-adenosyl-L-homocysteine. In terms of biological role, catalyzes the methyl esterification of L-isoaspartyl residues in peptides and proteins that result from spontaneous decomposition of normal L-aspartyl and L-asparaginyl residues. It plays a role in the repair and/or degradation of damaged proteins. The chain is Protein-L-isoaspartate O-methyltransferase from Dechloromonas aromatica (strain RCB).